A 249-amino-acid polypeptide reads, in one-letter code: Eukaryotic translation initiation factor 3 subunit K (249 aa).

In terms of domain architecture, PCI spans 46–222; the sequence is FDCYANLALL…VKVPSNKENE (177 aa).

This sequence belongs to the eIF-3 subunit K family. Component of the eukaryotic translation initiation factor 3 (eIF-3) complex.

Its subcellular location is the cytoplasm. Functionally, component of the eukaryotic translation initiation factor 3 (eIF-3) complex, which is involved in protein synthesis of a specialized repertoire of mRNAs and, together with other initiation factors, stimulates binding of mRNA and methionyl-tRNAi to the 40S ribosome. The eIF-3 complex specifically targets and initiates translation of a subset of mRNAs involved in cell proliferation. In Aspergillus clavatus (strain ATCC 1007 / CBS 513.65 / DSM 816 / NCTC 3887 / NRRL 1 / QM 1276 / 107), this protein is Eukaryotic translation initiation factor 3 subunit K.